The sequence spans 302 residues: Sulfate adenylyltransferase subunit 2 (302 aa).

The protein belongs to the PAPS reductase family. CysD subfamily. Heterodimer composed of CysD, the smaller subunit, and CysN.

It catalyses the reaction sulfate + ATP + H(+) = adenosine 5'-phosphosulfate + diphosphate. Its pathway is sulfur metabolism; hydrogen sulfide biosynthesis; sulfite from sulfate: step 1/3. Functionally, with CysN forms the ATP sulfurylase (ATPS) that catalyzes the adenylation of sulfate producing adenosine 5'-phosphosulfate (APS) and diphosphate, the first enzymatic step in sulfur assimilation pathway. APS synthesis involves the formation of a high-energy phosphoric-sulfuric acid anhydride bond driven by GTP hydrolysis by CysN coupled to ATP hydrolysis by CysD. The chain is Sulfate adenylyltransferase subunit 2 from Klebsiella pneumoniae (strain 342).